A 463-amino-acid chain; its full sequence is Argininosuccinate lyase (463 aa).

It belongs to the lyase 1 family. Argininosuccinate lyase subfamily.

The protein localises to the cytoplasm. It catalyses the reaction 2-(N(omega)-L-arginino)succinate = fumarate + L-arginine. Its pathway is amino-acid biosynthesis; L-arginine biosynthesis; L-arginine from L-ornithine and carbamoyl phosphate: step 3/3. This chain is Argininosuccinate lyase, found in Chlorobaculum parvum (strain DSM 263 / NCIMB 8327) (Chlorobium vibrioforme subsp. thiosulfatophilum).